Consider the following 491-residue polypeptide: Glucose-6-phosphate 1-dehydrogenase (491 aa).

Residues arginine 49, 91–92, and lysine 146 each bind NADP(+); that span reads DV. Substrate is bound by residues histidine 176, lysine 180, glutamate 214, and aspartate 233. The active-site Proton acceptor is the histidine 238. Positions 338 and 343 each coordinate substrate.

Belongs to the glucose-6-phosphate dehydrogenase family.

It carries out the reaction D-glucose 6-phosphate + NADP(+) = 6-phospho-D-glucono-1,5-lactone + NADPH + H(+). It participates in carbohydrate degradation; pentose phosphate pathway; D-ribulose 5-phosphate from D-glucose 6-phosphate (oxidative stage): step 1/3. In terms of biological role, catalyzes the oxidation of glucose 6-phosphate to 6-phosphogluconolactone. This is Glucose-6-phosphate 1-dehydrogenase from Buchnera aphidicola subsp. Acyrthosiphon pisum (strain APS) (Acyrthosiphon pisum symbiotic bacterium).